The primary structure comprises 242 residues: Methylthioribulose-1-phosphate dehydratase (242 aa).

Positions 1 to 22 (MAAASGHGLELANGGDATQDKL) are disordered. Cys97 serves as a coordination point for substrate. Zn(2+) is bound by residues His115 and His117. Residue Glu139 is the Proton donor/acceptor of the active site. A Zn(2+)-binding site is contributed by His195.

It belongs to the aldolase class II family. MtnB subfamily. Zn(2+) serves as cofactor.

The protein resides in the cytoplasm. It carries out the reaction 5-(methylsulfanyl)-D-ribulose 1-phosphate = 5-methylsulfanyl-2,3-dioxopentyl phosphate + H2O. The protein operates within amino-acid biosynthesis; L-methionine biosynthesis via salvage pathway; L-methionine from S-methyl-5-thio-alpha-D-ribose 1-phosphate: step 2/6. Functionally, catalyzes the dehydration of methylthioribulose-1-phosphate (MTRu-1-P) into 2,3-diketo-5-methylthiopentyl-1-phosphate (DK-MTP-1-P). Functions in the methionine salvage pathway. May play a role in apoptosis. In Gallus gallus (Chicken), this protein is Methylthioribulose-1-phosphate dehydratase.